The chain runs to 138 residues: Small ribosomal subunit protein uS11c (138 aa).

This sequence belongs to the universal ribosomal protein uS11 family. Part of the 30S ribosomal subunit.

It is found in the plastid. The protein localises to the chloroplast. This chain is Small ribosomal subunit protein uS11c, found in Phaseolus vulgaris (Kidney bean).